The sequence spans 429 residues: Phosphomethylpyrimidine synthase 1 (429 aa).

Residues N65, M94, Y123, H162, 184-186, 225-228, and E264 each bind substrate; these read SRG and DGLR. Position 268 (H268) interacts with Zn(2+). Y291 contacts substrate. H332 provides a ligand contact to Zn(2+). Residues C408, C411, and C415 each coordinate [4Fe-4S] cluster.

It belongs to the ThiC family. It depends on [4Fe-4S] cluster as a cofactor.

It carries out the reaction 5-amino-1-(5-phospho-beta-D-ribosyl)imidazole + S-adenosyl-L-methionine = 4-amino-2-methyl-5-(phosphooxymethyl)pyrimidine + CO + 5'-deoxyadenosine + formate + L-methionine + 3 H(+). The protein operates within cofactor biosynthesis; thiamine diphosphate biosynthesis. In terms of biological role, catalyzes the synthesis of the hydroxymethylpyrimidine phosphate (HMP-P) moiety of thiamine from aminoimidazole ribotide (AIR) in a radical S-adenosyl-L-methionine (SAM)-dependent reaction. In Methanosphaera stadtmanae (strain ATCC 43021 / DSM 3091 / JCM 11832 / MCB-3), this protein is Phosphomethylpyrimidine synthase 1.